Consider the following 308-residue polypeptide: Aspartate carbamoyltransferase catalytic subunit (308 aa).

Carbamoyl phosphate-binding residues include arginine 57 and threonine 58. Lysine 86 serves as a coordination point for L-aspartate. 3 residues coordinate carbamoyl phosphate: arginine 107, histidine 135, and glutamine 138. Arginine 168 and arginine 229 together coordinate L-aspartate. Residues leucine 268 and proline 269 each coordinate carbamoyl phosphate.

This sequence belongs to the aspartate/ornithine carbamoyltransferase superfamily. ATCase family. In terms of assembly, heterooligomer of catalytic and regulatory chains.

It carries out the reaction carbamoyl phosphate + L-aspartate = N-carbamoyl-L-aspartate + phosphate + H(+). It participates in pyrimidine metabolism; UMP biosynthesis via de novo pathway; (S)-dihydroorotate from bicarbonate: step 2/3. Catalyzes the condensation of carbamoyl phosphate and aspartate to form carbamoyl aspartate and inorganic phosphate, the committed step in the de novo pyrimidine nucleotide biosynthesis pathway. This Pyrococcus furiosus (strain ATCC 43587 / DSM 3638 / JCM 8422 / Vc1) protein is Aspartate carbamoyltransferase catalytic subunit.